The following is a 289-amino-acid chain: MAGAKEIKTKIASVQSTQKITKAMEMVATSKMRKTQDRMAASRPYSETIRNVISHVSKASIGYKHPFLVEREVKKIGILVISTDRGMCGGLNVNLFKTTLNQIKNWKEQNISTDLGLIGSKGISFFRSFGFNIKGQLSGLGDTPALEELIGVANTMFDAYRNGEIDAVYIAYNKFVNTMSQKPVVQQLVPLPESKDDHLNERQQTWDYLYEPEPKVLLDSLLVRYLESQIYQAVVDNVASEQAARMVAMKAATDNAGNLINDLRLVYNKARQASITNELNEIVAGAAAI.

Belongs to the ATPase gamma chain family. As to quaternary structure, F-type ATPases have 2 components, CF(1) - the catalytic core - and CF(0) - the membrane proton channel. CF(1) has five subunits: alpha(3), beta(3), gamma(1), delta(1), epsilon(1). CF(0) has three main subunits: a, b and c.

The protein resides in the cell inner membrane. Produces ATP from ADP in the presence of a proton gradient across the membrane. The gamma chain is believed to be important in regulating ATPase activity and the flow of protons through the CF(0) complex. The polypeptide is ATP synthase gamma chain (Haemophilus influenzae (strain ATCC 51907 / DSM 11121 / KW20 / Rd)).